The sequence spans 211 residues: Adenylate kinase (211 aa).

13 to 18 (GAGKGT) is an ATP binding site. Residues 33–62 (STGDILRVAVANKTKLGLEAKKFMDAGQLV) are NMP. AMP contacts are provided by residues Thr34, Arg39, 60-62 (QLV), 88-91 (GFPR), and Gln95. The LID stretch occupies residues 129–161 (GRRTSKVTGKIYHIKFNPPVDEKPEDLVQRADD). Residues Arg130 and 139 to 140 (IY) contribute to the ATP site. AMP is bound by residues Arg158 and Arg169. Residue Lys197 participates in ATP binding.

It belongs to the adenylate kinase family. Monomer.

It localises to the cytoplasm. The enzyme catalyses AMP + ATP = 2 ADP. It functions in the pathway purine metabolism; AMP biosynthesis via salvage pathway; AMP from ADP: step 1/1. In terms of biological role, catalyzes the reversible transfer of the terminal phosphate group between ATP and AMP. Plays an important role in cellular energy homeostasis and in adenine nucleotide metabolism. The chain is Adenylate kinase from Fusobacterium nucleatum subsp. nucleatum (strain ATCC 25586 / DSM 15643 / BCRC 10681 / CIP 101130 / JCM 8532 / KCTC 2640 / LMG 13131 / VPI 4355).